Consider the following 577-residue polypeptide: Sensor protein ChvG (577 aa).

The Cytoplasmic segment spans residues 1–29 (MRGQRRWAHPFTLIRRLFGNAVFSSLTRR). The chain crosses the membrane as a helical span at residues 30-50 (IVFFNLVALVVLVGGIMYLNQ). The Periplasmic portion of the chain corresponds to 51 to 260 (FREGLIDARV…DIDKIVHAER (210 aa)). The chain crosses the membrane as a helical span at residues 261 to 281 (LAIIRVFGVAALVNVILSLLL). Over 282–577 (SSTIANPLRR…VLSLPAGPHP (296 aa)) the chain is Cytoplasmic. The 57-residue stretch at 283-339 (STIANPLRRLSAAAIRVRRGGAKEREEIPDFSSRQDEIGNLSVALREMTTALYDRIA) folds into the HAMP domain. The 229-residue stretch at 347–575 (DVSHELKNPL…RFVLSLPAGP (229 aa)) folds into the Histidine kinase domain. H350 carries the post-translational modification Phosphohistidine.

Homodimer.

Its subcellular location is the cell inner membrane. The enzyme catalyses ATP + protein L-histidine = ADP + protein N-phospho-L-histidine.. It functions in the pathway glycan metabolism; exopolysaccharide biosynthesis. Its function is as follows. Member of a two-component regulatory system ChvG(ExoS)/ChvI involved in regulating the production of succinoglycan. Activates ChvI by phosphorylation. The polypeptide is Sensor protein ChvG (chvG) (Rhizobium meliloti (strain 1021) (Ensifer meliloti)).